Here is a 220-residue protein sequence, read N- to C-terminus: ATP-dependent dethiobiotin synthetase BioD (220 aa).

13-18 lines the ATP pocket; that stretch reads EVGKTV. T17 contacts Mg(2+). K38 is a catalytic residue. Position 42 (S42) interacts with substrate. ATP-binding positions include D55, 116 to 119, 176 to 177, and N212; these read EGAG and NR. Positions 55 and 116 each coordinate Mg(2+).

It belongs to the dethiobiotin synthetase family. As to quaternary structure, homodimer. The cofactor is Mg(2+).

The protein resides in the cytoplasm. It catalyses the reaction (7R,8S)-7,8-diammoniononanoate + CO2 + ATP = (4R,5S)-dethiobiotin + ADP + phosphate + 3 H(+). The protein operates within cofactor biosynthesis; biotin biosynthesis; biotin from 7,8-diaminononanoate: step 1/2. Functionally, catalyzes a mechanistically unusual reaction, the ATP-dependent insertion of CO2 between the N7 and N8 nitrogen atoms of 7,8-diaminopelargonic acid (DAPA, also called 7,8-diammoniononanoate) to form a ureido ring. The protein is ATP-dependent dethiobiotin synthetase BioD of Photobacterium profundum (strain SS9).